The sequence spans 223 residues: MTDIVVAIDGPAGTGKSSVSRGLARELGARYLDTGAMYRMMTLAVLRAGIDPADAAAIGESVWKVQMLSDHDRYFLGGEDVSSEIRTEEVTQAVSAVSAIPAVRVRLVDLQRQMAEGRGSVVVEGRDIGTVVLPDAPVKIFLTASPETRARRRNDQNVASGSADDYDRVLAEVRRRDHLDSTRAVSPLYVAQDAMIVDTSKMAEAEVIAHLMDLVKQRSGAVW.

10–18 (GPAGTGKSS) contributes to the ATP binding site.

It belongs to the cytidylate kinase family. Type 1 subfamily.

It is found in the cytoplasm. The catalysed reaction is CMP + ATP = CDP + ADP. It catalyses the reaction dCMP + ATP = dCDP + ADP. In Mycobacterium leprae (strain Br4923), this protein is Cytidylate kinase.